The following is a 180-amino-acid chain: ATP synthase subunit delta 2 (180 aa).

This sequence belongs to the ATPase delta chain family. As to quaternary structure, F-type ATPases have 2 components, F(1) - the catalytic core - and F(0) - the membrane proton channel. F(1) has five subunits: alpha(3), beta(3), gamma(1), delta(1), epsilon(1). F(0) has three main subunits: a(1), b(2) and c(10-14). The alpha and beta chains form an alternating ring which encloses part of the gamma chain. F(1) is attached to F(0) by a central stalk formed by the gamma and epsilon chains, while a peripheral stalk is formed by the delta and b chains.

The protein localises to the cell inner membrane. Its function is as follows. F(1)F(0) ATP synthase produces ATP from ADP in the presence of a proton or sodium gradient. F-type ATPases consist of two structural domains, F(1) containing the extramembraneous catalytic core and F(0) containing the membrane proton channel, linked together by a central stalk and a peripheral stalk. During catalysis, ATP synthesis in the catalytic domain of F(1) is coupled via a rotary mechanism of the central stalk subunits to proton translocation. This protein is part of the stalk that links CF(0) to CF(1). It either transmits conformational changes from CF(0) to CF(1) or is implicated in proton conduction. The chain is ATP synthase subunit delta 2 from Vibrio campbellii (strain ATCC BAA-1116).